An 887-amino-acid polypeptide reads, in one-letter code: MSERFPNDVDPIETRDWLQAIESVIREEGVERAQYLIDQLLAEARKGGVNVAAGTGISNYINTIPVEEQPEYPGNLELERRIRSAIRWNAIMTVLRASKKDLELGGHMASFQSSATIYDVCFNHFFRARNEQDGGDLVYFQGHISPGVYARAFLEGRLTQEQLDNFRQEVHGNGLSSYPHPKLMPEFWQFPTVSMGLGPIGAIYQAKFLKYLEHRGLKDTSKQTVYAFLGDGEMDEPESKGAITIATREKLDNLVFVINCNLQRLDGPVTGNGKIINELEGIFEGAGWNVIKVMWGSRWDELLRKDTSGKLIQLMNETVDGDYQTFKSKDGAYVREHFFGKYPETAALVADWTDEQIWALNRGGHDPKKIYAAFKKAQETKGKATVILAHTIKGYGMGDAAEGKNIAHQVKKMNMDGVRHIRDRFNVPVSDADIEKLPYITFPEGSEEHTYLHAQRQKLHGYLPSRQPNFTEKLELPSLQDFGALLEEQSKEISTTIAFVRALNVMLKNKSIKDRLVPIIADEARTFGMEGLFRQIGIYSPNGQQYTPQDREQVAYYKEDEKGQILQEGINELGAGCSWLAAATSYSTNNLPMIPFYIYYSMFGFQRIGDLCWAAGDQQARGFLIGGTSGRTTLNGEGLQHEDGHSHIQSLTIPNCISYDPAYAYEVAVIMHDGLERMYGEKQENVYYYITTLNENYHMPAMPEGAEEGIRKGIYKLETIEGSKGKVQLLGSGSILRHVREAAEILAKDYGVGSDVYSVTSFTELARDGQDCERWNMLHPLETPRVPYIAQVMNDAPAVASTDYMKLFAEQVRTYVPADDYRVLGTDGFGRSDSRENLRHHFEVDASYVVVAALGELAKRGEIDKKVVADAIAKFNIDADKVNPRLA.

Positions 231, 261, and 263 each coordinate Mg(2+). Position 716 is an N6-acetyllysine (K716).

As to quaternary structure, homodimer. Part of the PDH complex, consisting of multiple copies of pyruvate dehydrogenase (E1), dihydrolipoamide acetyltransferase (E2) and lipoamide dehydrogenase (E3). Mg(2+) is required as a cofactor. Requires thiamine diphosphate as cofactor.

The enzyme catalyses N(6)-[(R)-lipoyl]-L-lysyl-[protein] + pyruvate + H(+) = N(6)-[(R)-S(8)-acetyldihydrolipoyl]-L-lysyl-[protein] + CO2. Its function is as follows. Component of the pyruvate dehydrogenase (PDH) complex, that catalyzes the overall conversion of pyruvate to acetyl-CoA and CO(2). The chain is Pyruvate dehydrogenase E1 component (aceE) from Escherichia coli O157:H7.